Here is a 314-residue protein sequence, read N- to C-terminus: tRNA dimethylallyltransferase (314 aa).

12-19 provides a ligand contact to ATP; sequence GPTAAGKS. 14 to 19 provides a ligand contact to substrate; sequence TAAGKS. Interaction with substrate tRNA regions lie at residues 37–40, 161–165, and 245–250; these read DSAT, QRIQR, and RCVGYR.

This sequence belongs to the IPP transferase family. In terms of assembly, monomer. The cofactor is Mg(2+).

The catalysed reaction is adenosine(37) in tRNA + dimethylallyl diphosphate = N(6)-dimethylallyladenosine(37) in tRNA + diphosphate. Catalyzes the transfer of a dimethylallyl group onto the adenine at position 37 in tRNAs that read codons beginning with uridine, leading to the formation of N6-(dimethylallyl)adenosine (i(6)A). This Bordetella petrii (strain ATCC BAA-461 / DSM 12804 / CCUG 43448) protein is tRNA dimethylallyltransferase.